The chain runs to 634 residues: Genetic interactor of prohibitins 3, mitochondrial (634 aa).

A mitochondrion-targeting transit peptide spans 1–40; sequence MFSRLVLLRKVSISLGRYYSSQAHPQTYIYNLLSKSKCRS. The region spanning 171-378 is the CP-type G domain; sequence IPKLQQVLST…LFDVPGFTTN (208 aa).

This sequence belongs to the TRAFAC class YlqF/YawG GTPase family. GEP3 subfamily.

The protein localises to the mitochondrion. May be involved in the mitochondrial lipid metabolism. The polypeptide is Genetic interactor of prohibitins 3, mitochondrial (GEP3) (Candida dubliniensis (strain CD36 / ATCC MYA-646 / CBS 7987 / NCPF 3949 / NRRL Y-17841) (Yeast)).